The primary structure comprises 377 residues: ATP phosphoribosyltransferase regulatory subunit (377 aa).

It belongs to the class-II aminoacyl-tRNA synthetase family. HisZ subfamily. In terms of assembly, heteromultimer composed of HisG and HisZ subunits.

The protein localises to the cytoplasm. It participates in amino-acid biosynthesis; L-histidine biosynthesis; L-histidine from 5-phospho-alpha-D-ribose 1-diphosphate: step 1/9. Its function is as follows. Required for the first step of histidine biosynthesis. May allow the feedback regulation of ATP phosphoribosyltransferase activity by histidine. The polypeptide is ATP phosphoribosyltransferase regulatory subunit (Sinorhizobium medicae (strain WSM419) (Ensifer medicae)).